The sequence spans 73 residues: uncharacterized protein (73 aa).

In terms of processing, N-glycosylated.

This is an uncharacterized protein from Saccharomyces cerevisiae (strain ATCC 204508 / S288c) (Baker's yeast).